The sequence spans 211 residues: Thymidylate kinase (211 aa).

Position 10-17 (10-17 (GVEGCGKT)) interacts with ATP.

The protein belongs to the thymidylate kinase family.

The catalysed reaction is dTMP + ATP = dTDP + ADP. Functionally, phosphorylation of dTMP to form dTDP in both de novo and salvage pathways of dTTP synthesis. The protein is Thymidylate kinase of Trichormus variabilis (strain ATCC 29413 / PCC 7937) (Anabaena variabilis).